The following is a 248-amino-acid chain: Leucyl/phenylalanyl-tRNA--protein transferase (248 aa).

Belongs to the L/F-transferase family.

It is found in the cytoplasm. The catalysed reaction is N-terminal L-lysyl-[protein] + L-leucyl-tRNA(Leu) = N-terminal L-leucyl-L-lysyl-[protein] + tRNA(Leu) + H(+). It carries out the reaction N-terminal L-arginyl-[protein] + L-leucyl-tRNA(Leu) = N-terminal L-leucyl-L-arginyl-[protein] + tRNA(Leu) + H(+). It catalyses the reaction L-phenylalanyl-tRNA(Phe) + an N-terminal L-alpha-aminoacyl-[protein] = an N-terminal L-phenylalanyl-L-alpha-aminoacyl-[protein] + tRNA(Phe). Functions in the N-end rule pathway of protein degradation where it conjugates Leu, Phe and, less efficiently, Met from aminoacyl-tRNAs to the N-termini of proteins containing an N-terminal arginine or lysine. The sequence is that of Leucyl/phenylalanyl-tRNA--protein transferase from Rhizorhabdus wittichii (strain DSM 6014 / CCUG 31198 / JCM 15750 / NBRC 105917 / EY 4224 / RW1) (Sphingomonas wittichii).